A 191-amino-acid chain; its full sequence is ECF RNA polymerase sigma factor ShbA (191 aa).

The tract at residues 27-98 (LLAHVHPLAL…HKVADLQRAA (72 aa)) is sigma-70 factor domain-2. The segment at 100–122 (RHPGSTAVPSDEMPERPDDSLGP) is disordered. Residues 112–122 (MPERPDDSLGP) show a composition bias toward basic and acidic residues. A sigma-70 factor domain-4 region spans residues 138 to 187 (LLANLPENQRELLVLRVAVGLTAEETGQMLGMSPGAVRVAQHRALSRLRA). Residues 160–179 (AEETGQMLGMSPGAVRVAQH) constitute a DNA-binding region (H-T-H motif).

It belongs to the sigma-70 factor family. ECF subfamily.

Functionally, sigma factors are initiation factors that promote the attachment of RNA polymerase to specific initiation sites and are then released. Extracytoplasmic function (ECF) sigma factors are held in an inactive form by an anti-sigma factor until released. This alternative sigma factor governs the transcription of the principal sigma factor HrdB (SigA) throughout growth. Acts by binding to the promoter region. The chain is ECF RNA polymerase sigma factor ShbA from Streptomyces griseus subsp. griseus (strain JCM 4626 / CBS 651.72 / NBRC 13350 / KCC S-0626 / ISP 5235).